Here is a 284-residue protein sequence, read N- to C-terminus: MRVLKTIPEVRQSITEERRLGFSIGLVPTMGALHNGHIALVRRARAMCDRVLVSIFVNPKQFGPDEDFDKYPRDLKGDCALLEEAGVEYLFTPSVEEMWPPGNETIVNVEKLSRMLIGKLRPGHFCGVTSVVAKLFNIVQPDKAFFGEKDFQQILIVRRMVEDLAFPIEVVGVPVLREADGVASSSRNQFLTLEDRKAAKIIPESGKAAENLYRQGERSVDKLCKIVRDILQQESRAIIESIDLRDMETLSVVKGRLDKSAVLLLTVRFGEIRLIDQYILQEKG.

Residue 30 to 37 (MGALHNGH) coordinates ATP. H37 acts as the Proton donor in catalysis. Residue Q61 coordinates (R)-pantoate. A beta-alanine-binding site is contributed by Q61. 147 to 150 (GEKD) contacts ATP. Q153 provides a ligand contact to (R)-pantoate. Residues L176 and 184 to 187 (SSSR) contribute to the ATP site.

The protein belongs to the pantothenate synthetase family. As to quaternary structure, homodimer.

It is found in the cytoplasm. The catalysed reaction is (R)-pantoate + beta-alanine + ATP = (R)-pantothenate + AMP + diphosphate + H(+). It participates in cofactor biosynthesis; (R)-pantothenate biosynthesis; (R)-pantothenate from (R)-pantoate and beta-alanine: step 1/1. Catalyzes the condensation of pantoate with beta-alanine in an ATP-dependent reaction via a pantoyl-adenylate intermediate. The chain is Pantothenate synthetase from Bartonella henselae (strain ATCC 49882 / DSM 28221 / CCUG 30454 / Houston 1) (Rochalimaea henselae).